The primary structure comprises 671 residues: DEAD-box ATP-dependent RNA helicase 7 (671 aa).

The segment at 1-84 (MPSLMLSDKK…EKKKSSKKVK (84 aa)) is disordered. A compositionally biased stretch (basic and acidic residues) spans 26-41 (LDSKKGKKEQKLKLSD). A phosphoserine mark is found at S40 and S42. The segment covering 50-60 (KKSKKKDKKRK) has biased composition (basic residues). Positions 96–124 (NAVSKFRISAPLREKLKANGIEALFPIQA) match the Q motif motif. Residues 127–309 (FDMVLDGADL…NRFLKRDQKT (183 aa)) form the Helicase ATP-binding domain. An ATP-binding site is contributed by 140–147 (ARTGQGKT). A DEAD box motif is present at residues 255 to 258 (DEAD). In terms of domain architecture, Helicase C-terminal spans 339 to 479 (LIPDIISCYS…HLAAPQPDEI (141 aa)). Positions 627–671 (EREPLPQKRFGGGGRGNRFGGGGGNRFGGGGGRGRGGSGGRGQRY) are disordered. A compositionally biased stretch (gly residues) spans 636–671 (FGGGGRGNRFGGGGGNRFGGGGGRGRGGSGGRGQRY).

This sequence belongs to the DEAD box helicase family. DDX21/DDX50 subfamily.

Its subcellular location is the nucleus. The enzyme catalyses ATP + H2O = ADP + phosphate + H(+). The sequence is that of DEAD-box ATP-dependent RNA helicase 7 (RH7) from Arabidopsis thaliana (Mouse-ear cress).